The sequence spans 322 residues: Phospholipase A1 (322 aa).

The first 18 residues, 1 to 18 (MNFKYSILFICFGTLDRG), serve as a signal peptide directing secretion. Cysteines 23 and 106 form a disulfide. Ser-156 serves as the catalytic Nucleophile. Catalysis depends on Asp-184, which acts as the Charge relay system. 2 cysteine pairs are disulfide-bonded: Cys-195–Cys-200 and Cys-238–Cys-246. The active-site Charge relay system is the His-248. 3 disulfides stabilise this stretch: Cys-263-Cys-290, Cys-264-Cys-315, and Cys-283-Cys-288.

Belongs to the AB hydrolase superfamily. Lipase family. In terms of processing, contains six disulfide bonds. Is not glycosylated. Expressed by the venom gland.

It localises to the secreted. The catalysed reaction is a 1,2-diacyl-sn-glycero-3-phosphocholine + H2O = a 2-acyl-sn-glycero-3-phosphocholine + a fatty acid + H(+). Catalyzes the hydrolysis of phosphatidylcholine with phospholipase A1 activity. Shows hemolytic activity. Acts as an allergen. The protein is Phospholipase A1 of Polybia paulista (Neotropical social wasp).